The following is a 200-amino-acid chain: Peptidyl-tRNA hydrolase (200 aa).

Tyr-17 is a binding site for tRNA. The active-site Proton acceptor is the His-22. 3 residues coordinate tRNA: Tyr-78, Asn-80, and Asn-126.

Belongs to the PTH family. In terms of assembly, monomer.

It localises to the cytoplasm. It catalyses the reaction an N-acyl-L-alpha-aminoacyl-tRNA + H2O = an N-acyl-L-amino acid + a tRNA + H(+). Its function is as follows. Hydrolyzes ribosome-free peptidyl-tRNAs (with 1 or more amino acids incorporated), which drop off the ribosome during protein synthesis, or as a result of ribosome stalling. Catalyzes the release of premature peptidyl moieties from peptidyl-tRNA molecules trapped in stalled 50S ribosomal subunits, and thus maintains levels of free tRNAs and 50S ribosomes. The polypeptide is Peptidyl-tRNA hydrolase (Cutibacterium acnes (strain DSM 16379 / KPA171202) (Propionibacterium acnes)).